Reading from the N-terminus, the 499-residue chain is Increased recombination centers protein 15 (499 aa).

47 to 56 (DQRASLGGAY) contacts FAD.

The protein belongs to the class-I pyridine nucleotide-disulfide oxidoreductase family.

Its subcellular location is the cytoplasm. This is Increased recombination centers protein 15 (IRC15) from Saccharomyces cerevisiae (strain ATCC 204508 / S288c) (Baker's yeast).